A 178-amino-acid chain; its full sequence is Large ribosomal subunit protein uL6 (178 aa).

Belongs to the universal ribosomal protein uL6 family. Part of the 50S ribosomal subunit.

This protein binds to the 23S rRNA, and is important in its secondary structure. It is located near the subunit interface in the base of the L7/L12 stalk, and near the tRNA binding site of the peptidyltransferase center. This is Large ribosomal subunit protein uL6 from Exiguobacterium sibiricum (strain DSM 17290 / CCUG 55495 / CIP 109462 / JCM 13490 / 255-15).